Consider the following 174-residue polypeptide: uncharacterized protein (174 aa).

It belongs to the archaeal NMN adenylyltransferase family.

This is an uncharacterized protein from Archaeoglobus fulgidus (strain ATCC 49558 / DSM 4304 / JCM 9628 / NBRC 100126 / VC-16).